The chain runs to 401 residues: Stearoyl-[acyl-carrier-protein] 9-desaturase 3, chloroplastic (401 aa).

A disordered region spans residues 1–31 (MSMALLLTSPAMKQKPAVITSPRRGSSPSRR). A chloroplast-targeting transit peptide spans 1–35 (MSMALLLTSPAMKQKPAVITSPRRGSSPSRRLRVS). Residues Glu-140, Glu-178, His-181, Glu-231, Glu-264, and His-267 each coordinate Fe cation.

The protein belongs to the fatty acid desaturase type 2 family. Homodimer. Requires Fe(2+) as cofactor. Ubiquitously expressed with a preference in leaves, flowers and stems.

The protein localises to the plastid. It localises to the chloroplast. It carries out the reaction octadecanoyl-[ACP] + 2 reduced [2Fe-2S]-[ferredoxin] + O2 + 2 H(+) = (9Z)-octadecenoyl-[ACP] + 2 oxidized [2Fe-2S]-[ferredoxin] + 2 H2O. Its pathway is lipid metabolism; fatty acid metabolism. Its function is as follows. Converts stearoyl-ACP to oleoyl-ACP by introduction of a cis double bond between carbons 9 and 10 of the acyl chain. Also able to convert palmitoyl-ACP to palmitoleoyl-ACP at the C9 position. Exhibits delta-9 palmitoyl-[acyl-carrier-protein] desaturase (PAD) activity. Involved in omega-7 monounsaturated fatty acid biosynthesis, especially in the endosperm oil. This is Stearoyl-[acyl-carrier-protein] 9-desaturase 3, chloroplastic (S-ACP-DES3) from Arabidopsis thaliana (Mouse-ear cress).